The chain runs to 354 residues: Protein PHLOEM PROTEIN 2-LIKE A8 (354 aa).

Residues threonine 12 to leucine 179 form the TIR domain. Glutamate 86 is an active-site residue.

It catalyses the reaction NAD(+) + H2O = ADP-D-ribose + nicotinamide + H(+). The protein is Protein PHLOEM PROTEIN 2-LIKE A8 (PP2A8) of Arabidopsis thaliana (Mouse-ear cress).